Consider the following 1218-residue polypeptide: NACHT, LRR and PYD domains-containing protein 1a allele 4 (1218 aa).

Polar residues predominate over residues 1–29; that stretch reads MGESQSKQESNTRVAQHGSQQDVDPTFQT. Disordered regions lie at residues 1-44 and 71-91; these read MGES…QVEQ and EMDHESRRHSHQSKKKLDRSE. Positions 77–87 are enriched in basic residues; that stretch reads RRHSHQSKKKL. The region spanning 175 to 484 is the NACHT domain; that stretch reads QLVIIEGAAG…EFFAAMSYIL (310 aa). 181-188 is a binding site for ATP; that stretch reads GAAGIGKS. 3 LRR repeats span residues 343–364, 673–693, and 730–750; these read KERNTIIDFNLIGSIPVLLTLC, NLEELDLSGNPLSYSAVRSLC, and RLAELDLRLNDLGDNGVRQLC. Residues 799-815 show a composition bias toward polar residues; it reads TMPTENTDGEESLTSSK. Positions 799–842 are disordered; it reads TMPTENTDGEESLTSSKQQQQQSGDKHMEPLGTDDDFWGPSGPV. The interval 835 to 968 is ZU5; that stretch reads FWGPSGPVST…HFAVLENPSF (134 aa). The 284-residue stretch at 835–1118 folds into the FIIND domain; that stretch reads FWGPSGPVST…LRPALPRMAS (284 aa). The segment at 969 to 1118 is UPA; that stretch reads SPMGVLLRMI…LRPALPRMAS (150 aa). In terms of domain architecture, CARD spans 1122 to 1211; sequence DAPALLHFVD…HLIMDLLEKS (90 aa).

Belongs to the NLRP family. Interacts (via LRR repeats) with BCL2 and BCL2L1 (via the loop between motifs BH4 and BH3). Interacts with NOD2; this interaction is enhanced in the presence of muramyl dipeptide (MDP) and increases IL1B release. Interacts with EIF2AK2/PKR; this interaction requires EIF2AK2 activity, is accompanied by EIF2AK2 autophosphorylation and promotes inflammasome assembly in response to danger-associated signals. Interacts with MEFV; this interaction targets Nlrp1a to degradation by autophagy, hence preventing excessive IL1B- and IL18-mediated inflammation. Interacts with DPP9; leading to inhibit activation of the inflammasome. DPP9 acts via formation of a ternary complex, composed of a DPP9 homodimer, one full-length NLRP1 protein, and one cleaved C-terminus of Nlrp1a (NACHT, LRR and PYD domains-containing protein 1a, C-terminus). Interacts with DPP8; leading to inhibit activation of the inflammasome, probably via formation of a ternary complex with DPP8. As to quaternary structure, interacts with the C-terminal part of Nlrp1a (NACHT, LRR and PYD domains-containing protein 1a, C-terminus) in absence of pathogens and other damage-associated signals. In terms of assembly, interacts with the N-terminal part of Nlrp1a (NACHT, LRR and PYD domains-containing protein 1a, N-terminus) in absence of pathogens and other damage-associated signals. Homomultimer; forms the Nlrp1a inflammasome polymeric complex, a filament composed of homopolymers of this form in response to pathogens and other damage-associated signals. The Nlrp1a inflammasome polymeric complex directly recruits pro-caspase-1 (proCASP1) independently of PYCARD/ASC. Interacts (via CARD domain) with CASP1 (via CARD domain); leading to CASP1 activation. Post-translationally, autocatalytically cleaved. Autocatalytic cleavage in FIIND region occurs constitutively, prior to activation signals, and is required for inflammasome activity (IL1B release), possibly by facilitating CASP1 binding. Both N- and C-terminal parts remain associated non-covalently. In terms of processing, ubiquitinated in response to pathogen-associated signals, leading to its degradation by the proteasome and subsequent release of the cleaved C-terminal part of the protein (NACHT, LRR and PYD domains-containing protein 1a, C-terminus), which polymerizes and forms the Nlrp1a inflammasome.

The protein localises to the cytoplasm. It localises to the cytosol. Its subcellular location is the nucleus. It is found in the inflammasome. With respect to regulation, activated by pathogens and other damage-associated signals: activation promotes ubiquitination and degradation of the N-terminal part, releasing the cleaved C-terminal part of the protein (NACHT, LRR and PYD domains-containing protein 1a, C-terminus), which polymerizes and forms the Nlrp1a inflammasome. Nlrp1a inflammasome is inhibited by DPP8 and DPP9, which sequester the C-terminal fragment of Nlrp1a (NACHT, LRR and PYD domains-containing protein 1a, C-terminus) in a ternary complex, thereby preventing Nlrp1a oligomerization and activation. Nlrp1a inflammasome is strongly activated by Val-boroPro (Talabostat, PT-100), an inhibitor of dipeptidyl peptidases DPP8 and DPP9. Val-boroPro relieves inhibition of DPP8 and/or DPP9 by promoting disruption of the ternary complex, releasing its C-terminal part from autoinhibition. Not activated by cleavage by B.anthracis lethal toxin (LT) endopeptidase. Functionally, acts as the sensor component of the Nlrp1a inflammasome, which mediates inflammasome activation in response to various pathogen-associated signals, leading to subsequent pyroptosis. Inflammasomes are supramolecular complexes that assemble in the cytosol in response to pathogens and other damage-associated signals and play critical roles in innate immunity and inflammation. Acts as a recognition receptor (PRR): recognizes specific pathogens and other damage-associated signals, such as Val-boroPro inhibitor, and mediates the formation of the inflammasome polymeric complex. In response to pathogen-associated signals, the N-terminal part of Nlrp1a is degraded by the proteasome, releasing the cleaved C-terminal part of the protein (NACHT, LRR and PYD domains-containing protein 1a, C-terminus), which polymerizes to initiate the formation of the inflammasome complex: the inflammasome directly recruits pro-caspase-1 (proCASP1) independently of PYCARD/ASC and promotes caspase-1 (CASP1) activation, which subsequently cleaves and activates inflammatory cytokines IL1B and IL18 and gasdermin-D (GSDMD), leading to pyroptosis. In the absence of GSDMD expression, the Nlrp1a inflammasome is able to recruit and activate CASP8, leading to activation of gasdermin-E (GSDME). Its function is as follows. Constitutes the precursor of the Nlrp1a inflammasome, which mediates autoproteolytic processing within the FIIND domain to generate the N-terminal and C-terminal parts, which are associated non-covalently in absence of pathogens and other damage-associated signals. In terms of biological role, regulatory part that prevents formation of the Nlrp1a inflammasome: in absence of pathogens and other damage-associated signals, interacts with the C-terminal part of Nlrp1a (NACHT, LRR and PYD domains-containing protein 1a, C-terminus), preventing activation of the Nlrp1a inflammasome. In response to pathogen-associated signals, this part is ubiquitinated by the N-end rule pathway and degraded by the proteasome, releasing the cleaved C-terminal part of the protein, which polymerizes and forms the Nlrp1a inflammasome. Constitutes the active part of the Nlrp1a inflammasome. In absence of pathogens and other damage-associated signals, interacts with the N-terminal part of Nlrp1a (NACHT, LRR and PYD domains-containing protein 1a, N-terminus), preventing activation of the Nlrp1a inflammasome. In response to pathogen-associated signals, the N-terminal part of Nlrp1a is degraded by the proteasome, releasing this form, which polymerizes to form the Nlrp1a inflammasome complex: the Nlrp1a inflammasome complex then directly recruits pro-caspase-1 (proCASP1) and promotes caspase-1 (CASP1) activation, leading to gasdermin-D (GSDMD) cleavage and subsequent pyroptosis. In Rattus norvegicus (Rat), this protein is NACHT, LRR and PYD domains-containing protein 1a allele 4.